The chain runs to 257 residues: MKKTAFILLLFIALTWTTSPLVNGSEKSEEINEKDLRKKSELQGAALGNLKQIYYYNEKAKTENKESHDQFLQHTILFKGFFTNHSWYNDLLVDFDSKDIVDKYKGKKVDLYGAYYGYQCAGGTPNKTACMYGGVTLHDNNRLTEEKKVPINLWLDGKQNTVPLETVKTNKKNVTVQELDLQARRYLQEKYNLYNSDVFDGKVQRGLIVFHTSTEPSVNYDLFGAQGQNSNTLLRIYRDNKTINSENMHIDIYLYTS.

The first 27 residues, 1–27 (MKKTAFILLLFIALTWTTSPLVNGSEK), serve as a signal peptide directing secretion. A disulfide bridge connects residues cysteine 120 and cysteine 130. Histidine 211, histidine 249, and aspartate 251 together coordinate Zn(2+).

It belongs to the staphylococcal/streptococcal toxin family. As to quaternary structure, monomer. Interacts with MHC class II molecules alpha/HLA-DRB1 and beta/HLA-DRA chains. The interaction with MHC-II molecules occurs at both zinc-dependent and zinc-independent sites. Interacts with T-cell receptor beta variable 7-9/TRBV7-9. Zn(2+) is required as a cofactor.

It localises to the secreted. Functionally, staphylococcal enterotoxin that activates the host immune system by binding as unprocessed molecules to major histocompatibility (MHC) complex class II and T-cell receptor (TCR) molecules. In turn, waves of cellular activation, cytokine production, and migration into the lung tissue and airways occur via alphabeta T-cells. Also causes the intoxication staphylococcal food poisoning syndrome. The illness is characterized by high fever, hypotension, diarrhea, shock, and in some cases death. The polypeptide is Enterotoxin type A (sea) (Staphylococcus aureus (strain Newman)).